We begin with the raw amino-acid sequence, 768 residues long: UPF0313 protein VV1_2212 (768 aa).

A Radical SAM core domain is found at 363-640; the sequence is AYDMIKTSVN…LHKALLRYHD (278 aa). Residues Cys377, Cys381, and Cys384 each coordinate [4Fe-4S] cluster. The disordered stretch occupies residues 674–768; the sequence is DARTPAQRRK…GGRNQPSRAR (95 aa). Positions 679–689 are enriched in basic residues; the sequence is AQRRKSGRHGA. Polar residues predominate over residues 719 to 731; it reads GGQSNSAPSRSGS.

Belongs to the UPF0313 family. [4Fe-4S] cluster serves as cofactor.

This chain is UPF0313 protein VV1_2212, found in Vibrio vulnificus (strain CMCP6).